Reading from the N-terminus, the 370-residue chain is D-aspartate oxidase (370 aa).

Residues M1–A18 form the signal peptide. 5 residues coordinate FAD: I13, E42, A63, S64, and G68. N-linked (GlcNAc...) asparagine glycosylation occurs at N207. 3 residues coordinate FAD: R308, G338, and Y339.

It belongs to the DAMOX/DASOX family. As to quaternary structure, monomer. Requires FAD as cofactor.

It catalyses the reaction D-aspartate + O2 + H2O = oxaloacetate + H2O2 + NH4(+). It carries out the reaction D-glutamate + O2 + H2O = H2O2 + 2-oxoglutarate + NH4(+). Functionally, selectively catalyzes the oxidative deamination of acidic amino acids. Protects the organism from the toxicity of D-amino acids. Enables the organism to utilize D-amino acids as a source of nutrients. This is D-aspartate oxidase from Talaromyces thermophilus.